Reading from the N-terminus, the 807-residue chain is Ribosome biogenesis protein ERB1 (807 aa).

Positions 1–112 (MMAKNNKTTE…DTTSLTDRLS (112 aa)) are disordered. 2 stretches are compositionally biased toward acidic residues: residues 21-30 (EESDVEEDED) and 42-56 (EASESDEDDDEYESA). Serine 23 is modified (phosphoserine). Residues 57-69 (VEEKESSSDKEAQ) show a composition bias toward basic and acidic residues. A phosphoserine mark is found at serine 72 and serine 76. Residues 86 to 102 (EEEGDEEEDYDSSEFSD) are compositionally biased toward acidic residues. Lysine 127 is covalently cross-linked (Glycyl lysine isopeptide (Lys-Gly) (interchain with G-Cter in ubiquitin)). Phosphoserine is present on residues serine 146 and serine 149. A required for interaction with NOP7 region spans residues 265 to 383 (RFVPSKNEAK…LRKVPGYGES (119 aa)). The segment at 383 to 419 (SIRERFERSLDLYLAPRVRKNKLNIDPNSLIPELPSP) is required for interaction with YTM1. Serine 418 bears the Phosphoserine mark. WD repeat units follow at residues 435–474 (GHKGKVRTLSIDPSGLWLATGSDDGTVRVWEILTGREVYR), 483–523 (NPDD…YDIE), 592–634 (SCKK…TQSP), 637–675 (KSKGIIMDAKFHPFKPQLFVCSQRYVRIYDLSQQILVKK), 678–717 (PGARWLSKIDIHPRGDNLIASSFDKRVLWHDLDLASTPYK), 721–760 (YHEKAVRSVNFHKKLPLFSSAADDGTIHVFHATVYDDMMK), and 776–807 (INSLGVLDAIWHPREAWLFSAGADNTARLWTT).

Belongs to the WD repeat BOP1/ERB1 family. In terms of assembly, component of the NOP7 complex, composed of ERB1, NOP7 and YTM1. The complex is held together by ERB1, which interacts with NOP7 via its N-terminal domain and with YTM1 via a high-affinity interaction between the seven-bladed beta-propeller domains of the 2 proteins. The NOP7 complex associates with the 66S pre-ribosome.

The protein resides in the nucleus. It is found in the nucleolus. The protein localises to the nucleoplasm. In terms of biological role, component of the NOP7 complex, which is required for maturation of the 25S and 5.8S ribosomal RNAs and formation of the 60S ribosome. The protein is Ribosome biogenesis protein ERB1 of Saccharomyces cerevisiae (strain YJM789) (Baker's yeast).